The chain runs to 227 residues: Transmembrane emp24 domain-containing protein 4 (227 aa).

Positions 1–29 (MAGVGAGPLRAMGRQALLLLALCATGAQG) are cleaved as a signal peptide. Topologically, residues 30–194 (LYFHIGETEK…RLTSESTNQR (165 aa)) are lumenal. The 99-residue stretch at 39 to 137 (KRCFIEEIPD…KLRVHLDIQV (99 aa)) folds into the GOLD domain. N-linked (GlcNAc...) asparagine glycosylation is present at Asn-117. Residues 147–176 (IAAKDKLTELQLRARQLLDQVEQIQKEQDY) are a coiled coil. The helical transmembrane segment at 195-212 (VLWWSIAQTVILILTGIW) threads the bilayer. Residues 213–227 (QMRHLKSFFEAKKLV) are Cytoplasmic-facing. The COPII vesicle coat-binding motif lies at 220–221 (FF). A COPI vesicle coat-binding motif is present at residues 220 to 227 (FFEAKKLV).

This sequence belongs to the EMP24/GP25L family.

It localises to the endoplasmic reticulum membrane. In terms of biological role, involved in vesicular protein trafficking, mainly in the early secretory pathway. targeting. Involved in the maintenance of the Golgi apparatus. Appears to play a role in the biosynthesis of secreted cargo including processing. Involved in endoplasmic reticulum stress response. May play a role in the regulation of heat-shock response and apoptosis. The protein is Transmembrane emp24 domain-containing protein 4 (TMED4) of Homo sapiens (Human).